The primary structure comprises 633 residues: Glutamyl-tRNA(Gln) amidotransferase subunit E (633 aa).

Positions Ala-414 to Asp-437 are disordered.

The protein belongs to the GatB/GatE family. GatE subfamily. Heterodimer of GatD and GatE.

The catalysed reaction is L-glutamyl-tRNA(Gln) + L-glutamine + ATP + H2O = L-glutaminyl-tRNA(Gln) + L-glutamate + ADP + phosphate + H(+). Its function is as follows. Allows the formation of correctly charged Gln-tRNA(Gln) through the transamidation of misacylated Glu-tRNA(Gln) in organisms which lack glutaminyl-tRNA synthetase. The reaction takes place in the presence of glutamine and ATP through an activated gamma-phospho-Glu-tRNA(Gln). The GatDE system is specific for glutamate and does not act on aspartate. This is Glutamyl-tRNA(Gln) amidotransferase subunit E from Pyrococcus abyssi (strain GE5 / Orsay).